The following is a 446-amino-acid chain: Packaging protein 1 (446 aa).

Residues 1-72 (MEEKAGLRHL…SQVSKSKKQR (72 aa)) are disordered. Over residues 10 to 21 (LQNQQNEPSQDP) the composition is skewed to polar residues. Residues 32 to 43 (HSDRNHLNKEAE) show a composition bias toward basic and acidic residues. An ATP-binding site is contributed by 170-177 (GPTGCGKS). The DNA-binding stretch occupies residues 439–446 (RYYHSKKK).

The protein belongs to the adenoviridae packaging protein 1 family. Homodimer. Part of a genome packaging complex composed of packaging proteins 1, 2 and 3; this complex specifically binds to the packaging sequence on the left end of viral genomic DNA and performs packaging of the viral genome. Interacts with protein 33K.

The protein resides in the virion. It localises to the host nucleus. The protein localises to the host nucleoplasm. It is found in the host nucleolus. Component of the packaging machinery which encapsidates the viral DNA into preformed capsids and transcriptional activator of the viral major late promoter (MLP). Binds, along with packaging proteins 2 and 3, to the specific packaging sequence on the left end of viral genomic DNA and displays ATPase activity thereby providing the power stroke of the packaging machinery. The activity of packaging protein IVa2 is stimulated by protein 33K which acts as a terminase. May be the protein that pumps DNA into the capsid powered by ATP hydrolysis. Specifically binds to the 5'-CG-3' nucleotides of the repeats making up the packaging sequence. Component of the DEF-A and DEF-B transcription factors that bind downstream elements of the major late promoter (MLP), and stimulate transcription from the MLP after initiation of viral DNA replication. DEF-A is a heterodimer packaging proteins 1 and 2 and DEF-B is a homodimer of packaging protein 1. The sequence is that of Packaging protein 1 from Canine adenovirus serotype 1 (strain CLL) (CAdV-1).